Consider the following 343-residue polypeptide: MSDSGEPKPSQQEEPLPQPAAQETQSQQVCTFFKKPTKSKNIRKRTIDADEEDGDSKSESSILQNLKKVAKPDSKLYFSSGPSKSSTTTSGAPERSVFHYDSSKEIQVQNDSGATATLETETDFNQDARAIRERVLKKADEALKGNKKKASDEKLYKGIHGYTDHKAGFRREQTISSEKAGGSHGPLRASAHIRVSARFDYQPDICKDYKETGYCGYGDSCKFLHDRGDYKPGWQIEKEWEEAEKVRKRNKAMGVEDEDDEADKDSDEDENALPFACFICREPFVDPVVTKCKHYFCEHCALKHHTKNKKCFVCNQPTMGIFNAAHEIKKRMAEERSKAEQGL.

Residues 1 to 102 (MSDSGEPKPS…PERSVFHYDS (102 aa)) are disordered. Over residues 7–25 (PKPSQQEEPLPQPAAQETQ) the composition is skewed to low complexity. The segment covering 35 to 44 (KPTKSKNIRK) has biased composition (basic residues). Over residues 79-91 (SSGPSKSSTTTSG) the composition is skewed to low complexity. A C3H1-type zinc finger spans residues 200–228 (DYQPDICKDYKETGYCGYGDSCKFLHDRG). The segment at 249–268 (RNKAMGVEDEDDEADKDSDE) is disordered. Over residues 255 to 268 (VEDEDDEADKDSDE) the composition is skewed to acidic residues. An RING-type zinc finger spans residues 277–315 (CFICREPFVDPVVTKCKHYFCEHCALKHHTKNKKCFVCN).

This Arabidopsis thaliana (Mouse-ear cress) protein is Zinc finger CCCH domain-containing protein 1.